A 356-amino-acid polypeptide reads, in one-letter code: Glutamine synthetase PR-1 (356 aa).

Positions 19–99 (VIAEYIWIGG…VICDAYTPAG (81 aa)) constitute a GS beta-grasp domain. The interval 41–64 (PGPVKNPSELPKWNYDGSSTGQAP) is disordered. The GS catalytic domain maps to 106 to 356 (KRHNAAKIFS…IADTTILWKP (251 aa)).

The protein belongs to the glutamine synthetase family. Homooctamer. As to expression, roots.

It is found in the cytoplasm. It catalyses the reaction L-glutamate + NH4(+) + ATP = L-glutamine + ADP + phosphate + H(+). The sequence is that of Glutamine synthetase PR-1 from Phaseolus vulgaris (Kidney bean).